Consider the following 78-residue polypeptide: Small ribosomal subunit protein uS17 (78 aa).

Belongs to the universal ribosomal protein uS17 family. Part of the 30S ribosomal subunit.

Its function is as follows. One of the primary rRNA binding proteins, it binds specifically to the 5'-end of 16S ribosomal RNA. In Sinorhizobium medicae (strain WSM419) (Ensifer medicae), this protein is Small ribosomal subunit protein uS17.